A 270-amino-acid polypeptide reads, in one-letter code: MPAPRGLLRATFLVLVAFGLLLHIDFSDATNMTSSTNVPTSTSSRNTVESTTSSEPTTETNMTTARESSVHDARNDEIMKVLAILFYIVTGTSIFSFIAVLIAVVYSSCCKHPGRFRFADEEAVNLLDDTDDSGGSSPFGSGSRRGSQIPAGFCSSSPYQRLETRDWDEEEEASAARERMKHDPENVIYFRKDGNLDTSFVNPNYGRGSPLTIESHLSDNEEDPIRYYVSVYDELTASEMEEPSNSTSWQIPKLMKVAMQPVSLRDPEYD.

A signal peptide spans 1 to 29 (MPAPRGLLRATFLVLVAFGLLLHIDFSDA). N-linked (GlcNAc...) asparagine; by host glycosylation is found at Asn31 and Asn61. Positions 33 to 67 (TSSTNVPTSTSSRNTVESTTSSEPTTETNMTTARE) are enriched in low complexity. The disordered stretch occupies residues 33-70 (TSSTNVPTSTSSRNTVESTTSSEPTTETNMTTARESSV). The helical transmembrane segment at 84-104 (ILFYIVTGTSIFSFIAVLIAV) threads the bilayer. The segment at 129 to 179 (DTDDSGGSSPFGSGSRRGSQIPAGFCSSSPYQRLETRDWDEEEEASAARER) is disordered. Positions 133–147 (SGGSSPFGSGSRRGS) are enriched in low complexity. Asn245 carries an N-linked (GlcNAc...) asparagine; by host glycan.

It belongs to the HHV-5 UL132 family.

The protein localises to the virion membrane. This Homo sapiens (Human) protein is Envelope glycoprotein UL132 (UL132).